Consider the following 199-residue polypeptide: uncharacterized protein (199 aa).

An N-terminal signal peptide occupies residues 1–28 (MKKLATVGSLIVTSTLVFSSMPFQNAHA).

The protein localises to the secreted. This is an uncharacterized protein from Staphylococcus aureus (strain NCTC 8325 / PS 47).